A 336-amino-acid polypeptide reads, in one-letter code: Dihydroorotate dehydrogenase (quinone) (336 aa).

FMN contacts are provided by residues 62–66 and Thr86; that span reads AGLDK. Residue Lys66 coordinates substrate. Residue 111 to 115 coordinates substrate; sequence NRMGF. Positions 139 and 172 each coordinate FMN. Asn172 contacts substrate. Ser175 acts as the Nucleophile in catalysis. Asn177 is a binding site for substrate. Lys217 and Thr245 together coordinate FMN. 246-247 serves as a coordination point for substrate; the sequence is NT. Residues Gly268, Gly297, and 318 to 319 contribute to the FMN site; that span reads FS.

This sequence belongs to the dihydroorotate dehydrogenase family. Type 2 subfamily. Monomer. The cofactor is FMN.

It is found in the cell membrane. It carries out the reaction (S)-dihydroorotate + a quinone = orotate + a quinol. Its pathway is pyrimidine metabolism; UMP biosynthesis via de novo pathway; orotate from (S)-dihydroorotate (quinone route): step 1/1. In terms of biological role, catalyzes the conversion of dihydroorotate to orotate with quinone as electron acceptor. The polypeptide is Dihydroorotate dehydrogenase (quinone) (Photorhabdus laumondii subsp. laumondii (strain DSM 15139 / CIP 105565 / TT01) (Photorhabdus luminescens subsp. laumondii)).